The primary structure comprises 411 residues: Secretion apparatus protein BsaZ (411 aa).

4 helical membrane-spanning segments follow: residues 28 to 48, 80 to 100, 137 to 157, and 175 to 195; these read IVAL…VDLT, IAAP…LVQS, ALLY…LYHA, and IVLT…VLIL. The tract at residues 341–411 is disordered; the sequence is AANRGGPPPE…APARTGDQNA (71 aa). The segment covering 370–404 has biased composition (low complexity); it reads DACADNAFPDDAPPGAAAPNAGSPDGPAPDGGAPA.

The protein belongs to the type III secretion exporter family.

The protein localises to the cell membrane. Functionally, part of the bsa type III secretion system, is involved in the intracellular replication of invading bacteria inside the host cell. Probably necessary for the lysis of the vacuole membrane and escape into the host cell cytoplasm. This is Secretion apparatus protein BsaZ (bsaZ) from Burkholderia pseudomallei (strain K96243).